A 325-amino-acid chain; its full sequence is MSLMIYSVLVAFVVSLIQGPILIPLLHKFKFGQNIRSEGPESHKKKSGTPTMGGVIFIISSVITVFVVSRHPSFETKLAIFAFVAFGIIGLIDDSLKIIHKENEGLKAYQKMILLLIVSSIIGFYAYNNPRIGSEIIVPFVHKTWNLGMFYIPFIIFYFAATTNAVNLTDGLDGLATSITLLVMTFFAVVSYATGNYNLAVFCSIVAGALLGFLKYNAYPAQVFMGDTGSLALGGVVGAVAMMLKLPLIVIIVGGIYLAEALSVILQVGSFKLRGKRIFKMSPIHHHFELSGWHETKIVSIFSIITVILCLIGFLSLIKMNGFSL.

The next 10 helical transmembrane spans lie at 3–23 (LMIYSVLVAFVVSLIQGPILI), 48–68 (GTPTMGGVIFIISSVITVFVV), 79–99 (AIFAFVAFGIIGLIDDSLKII), 106–126 (LKAYQKMILLLIVSSIIGFYA), 136–156 (IIVPFVHKTWNLGMFYIPFII), 174–194 (GLATSITLLVMTFFAVVSYAT), 199–219 (LAVFCSIVAGALLGFLKYNAY), 223–243 (VFMGDTGSLALGGVVGAVAMM), 246–266 (LPLIVIIVGGIYLAEALSVIL), and 298–318 (IVSIFSIITVILCLIGFLSLI).

The protein belongs to the glycosyltransferase 4 family. MraY subfamily. Requires Mg(2+) as cofactor.

It is found in the cell membrane. It carries out the reaction UDP-N-acetyl-alpha-D-muramoyl-L-alanyl-gamma-D-glutamyl-meso-2,6-diaminopimeloyl-D-alanyl-D-alanine + di-trans,octa-cis-undecaprenyl phosphate = di-trans,octa-cis-undecaprenyl diphospho-N-acetyl-alpha-D-muramoyl-L-alanyl-D-glutamyl-meso-2,6-diaminopimeloyl-D-alanyl-D-alanine + UMP. It participates in cell wall biogenesis; peptidoglycan biosynthesis. Its function is as follows. Catalyzes the initial step of the lipid cycle reactions in the biosynthesis of the cell wall peptidoglycan: transfers peptidoglycan precursor phospho-MurNAc-pentapeptide from UDP-MurNAc-pentapeptide onto the lipid carrier undecaprenyl phosphate, yielding undecaprenyl-pyrophosphoryl-MurNAc-pentapeptide, known as lipid I. The protein is Phospho-N-acetylmuramoyl-pentapeptide-transferase of Clostridium novyi (strain NT).